Consider the following 118-residue polypeptide: Ribosome-binding factor A (118 aa).

The protein belongs to the RbfA family. In terms of assembly, monomer. Binds 30S ribosomal subunits, but not 50S ribosomal subunits or 70S ribosomes.

It localises to the cytoplasm. Functionally, one of several proteins that assist in the late maturation steps of the functional core of the 30S ribosomal subunit. Associates with free 30S ribosomal subunits (but not with 30S subunits that are part of 70S ribosomes or polysomes). Required for efficient processing of 16S rRNA. May interact with the 5'-terminal helix region of 16S rRNA. The sequence is that of Ribosome-binding factor A from Bacillus anthracis (strain A0248).